An 87-amino-acid polypeptide reads, in one-letter code: Diazepam-binding inhibitor-like 5 (87 aa).

Positions 2-87 (SQVEFEMACA…VEELKKNETC (86 aa)) constitute an ACB domain. An acyl-CoA is bound by residues 29 to 33 (YSFYK), Lys-55, and Tyr-74.

This sequence belongs to the ACBP family. Testis.

Its subcellular location is the cytoplasm. In terms of biological role, may be involved in the energy metabolism of the mature sperm. This Rattus norvegicus (Rat) protein is Diazepam-binding inhibitor-like 5 (Dbil5).